The following is a 198-amino-acid chain: MLQQIYDFLNINYNVSRETFNKFKEYYSLLSKWNSTINLVSATTLQNFWQRHIFDSIQLLNYIHNKDIIVADLGSGAGFPGVVLSISGIKNVILIESDSRKAAFLLQAAQLSDQKIEIINDRIQNLKVKCDLVTVRALANLSTILSHTKQFTVKDKYLILKGKNYQHEITQALLHNKFNYTLYQSCTDDSSWILEIRI.

S-adenosyl-L-methionine is bound by residues Gly-74, Phe-79, 123-124 (IQ), and Arg-136.

The protein belongs to the methyltransferase superfamily. RNA methyltransferase RsmG family.

The protein localises to the cytoplasm. The catalysed reaction is guanosine(527) in 16S rRNA + S-adenosyl-L-methionine = N(7)-methylguanosine(527) in 16S rRNA + S-adenosyl-L-homocysteine. In terms of biological role, specifically methylates the N7 position of guanine in position 527 of 16S rRNA. In Orientia tsutsugamushi (strain Boryong) (Rickettsia tsutsugamushi), this protein is Ribosomal RNA small subunit methyltransferase G.